Reading from the N-terminus, the 418-residue chain is Putative ion-transport protein YfeO (418 aa).

Helical transmembrane passes span 10–30 (LLLS…LIVV), 54–74 (DSPL…GLVI), 99–119 (ALPG…SLGP), 120–140 (EHPI…RLLP), 149–169 (ILAS…AALI), 186–206 (LFAP…FFHP), 223–243 (ILSG…AVWC), 258–278 (VLVL…GGPV), 300–320 (DYFL…ASGF), 322–342 (GGRI…LHEH), 343–363 (VPAV…VLVV), and 371–391 (LFMA…CIVM).

This sequence belongs to the chloride channel (TC 2.A.49) family.

The protein resides in the cell membrane. The polypeptide is Putative ion-transport protein YfeO (Escherichia coli O139:H28 (strain E24377A / ETEC)).